Here is a 227-residue protein sequence, read N- to C-terminus: Large ribosomal subunit protein uL3 (227 aa).

Belongs to the universal ribosomal protein uL3 family. In terms of assembly, part of the 50S ribosomal subunit. Forms a cluster with proteins L14 and L19.

Its function is as follows. One of the primary rRNA binding proteins, it binds directly near the 3'-end of the 23S rRNA, where it nucleates assembly of the 50S subunit. The protein is Large ribosomal subunit protein uL3 of Leuconostoc citreum (strain KM20).